The sequence spans 51 residues: Insulin (51 aa).

3 disulfides stabilise this stretch: cysteine 7-cysteine 37, cysteine 19-cysteine 50, and cysteine 36-cysteine 41.

The protein belongs to the insulin family. In terms of assembly, heterodimer of a B chain and an A chain linked by two disulfide bonds.

The protein localises to the secreted. Its function is as follows. Insulin decreases blood glucose concentration. It increases cell permeability to monosaccharides, amino acids and fatty acids. It accelerates glycolysis, the pentose phosphate cycle, and glycogen synthesis in liver. This is Insulin (INS) from Meleagris gallopavo (Wild turkey).